We begin with the raw amino-acid sequence, 250 residues long: Purine nucleoside phosphorylase BQ2027_MB2173C (250 aa).

Positions 77, 114, and 131 each coordinate Zn(2+).

This sequence belongs to the purine nucleoside phosphorylase YfiH/LACC1 family. As to quaternary structure, homodimer. Requires Cu(2+) as cofactor. Zn(2+) serves as cofactor.

It carries out the reaction adenosine + phosphate = alpha-D-ribose 1-phosphate + adenine. The catalysed reaction is S-methyl-5'-thioadenosine + phosphate = 5-(methylsulfanyl)-alpha-D-ribose 1-phosphate + adenine. It catalyses the reaction inosine + phosphate = alpha-D-ribose 1-phosphate + hypoxanthine. The enzyme catalyses adenosine + H2O + H(+) = inosine + NH4(+). Purine nucleoside enzyme that catalyzes the phosphorolysis of adenosine and inosine nucleosides, yielding D-ribose 1-phosphate and the respective free bases, adenine and hypoxanthine. Also catalyzes the phosphorolysis of S-methyl-5'-thioadenosine into adenine and S-methyl-5-thio-alpha-D-ribose 1-phosphate. Also has adenosine deaminase activity. This Mycobacterium bovis (strain ATCC BAA-935 / AF2122/97) protein is Purine nucleoside phosphorylase BQ2027_MB2173C.